Consider the following 272-residue polypeptide: Shikimate dehydrogenase (NADP(+)) (272 aa).

Shikimate is bound by residues 20-22 (TMS) and Thr67. Catalysis depends on Lys71, which acts as the Proton acceptor. Glu83 contributes to the NADP(+) binding site. The shikimate site is built by Asn92 and Asp107. NADP(+) is bound by residues 129–133 (GAGGA), 153–158 (NRTKSK), and Leu216. Residue Tyr218 coordinates shikimate. Gly239 is a binding site for NADP(+).

It belongs to the shikimate dehydrogenase family. Homodimer.

It catalyses the reaction shikimate + NADP(+) = 3-dehydroshikimate + NADPH + H(+). It participates in metabolic intermediate biosynthesis; chorismate biosynthesis; chorismate from D-erythrose 4-phosphate and phosphoenolpyruvate: step 4/7. Functionally, involved in the biosynthesis of the chorismate, which leads to the biosynthesis of aromatic amino acids. Catalyzes the reversible NADPH linked reduction of 3-dehydroshikimate (DHSA) to yield shikimate (SA). This Maridesulfovibrio salexigens (strain ATCC 14822 / DSM 2638 / NCIMB 8403 / VKM B-1763) (Desulfovibrio salexigens) protein is Shikimate dehydrogenase (NADP(+)).